A 258-amino-acid chain; its full sequence is Acyl-[acyl-carrier-protein]--UDP-N-acetylglucosamine O-acyltransferase (258 aa).

This sequence belongs to the transferase hexapeptide repeat family. LpxA subfamily. Homotrimer.

It is found in the cytoplasm. The catalysed reaction is a (3R)-hydroxyacyl-[ACP] + UDP-N-acetyl-alpha-D-glucosamine = a UDP-3-O-[(3R)-3-hydroxyacyl]-N-acetyl-alpha-D-glucosamine + holo-[ACP]. Its pathway is glycolipid biosynthesis; lipid IV(A) biosynthesis; lipid IV(A) from (3R)-3-hydroxytetradecanoyl-[acyl-carrier-protein] and UDP-N-acetyl-alpha-D-glucosamine: step 1/6. Its function is as follows. Involved in the biosynthesis of lipid A, a phosphorylated glycolipid that anchors the lipopolysaccharide to the outer membrane of the cell. This is Acyl-[acyl-carrier-protein]--UDP-N-acetylglucosamine O-acyltransferase from Neisseria meningitidis serogroup B (strain ATCC BAA-335 / MC58).